Consider the following 367-residue polypeptide: Peptide chain release factor 2 (367 aa).

Gln250 carries the post-translational modification N5-methylglutamine.

It belongs to the prokaryotic/mitochondrial release factor family. Methylated by PrmC. Methylation increases the termination efficiency of RF2.

The protein resides in the cytoplasm. Its function is as follows. Peptide chain release factor 2 directs the termination of translation in response to the peptide chain termination codons UGA and UAA. The chain is Peptide chain release factor 2 from Mycobacteroides abscessus (strain ATCC 19977 / DSM 44196 / CCUG 20993 / CIP 104536 / JCM 13569 / NCTC 13031 / TMC 1543 / L948) (Mycobacterium abscessus).